Consider the following 91-residue polypeptide: Probable Fe(2+)-trafficking protein (91 aa).

The protein belongs to the Fe(2+)-trafficking protein family. In terms of assembly, monomer.

Its function is as follows. Could be a mediator in iron transactions between iron acquisition and iron-requiring processes, such as synthesis and/or repair of Fe-S clusters in biosynthetic enzymes. In Citrobacter koseri (strain ATCC BAA-895 / CDC 4225-83 / SGSC4696), this protein is Probable Fe(2+)-trafficking protein.